Here is a 494-residue protein sequence, read N- to C-terminus: Hydroxyneurosporene desaturase (494 aa).

The protein belongs to the carotenoid/retinoid oxidoreductase family.

The enzyme catalyses rhodopin + A = (3E)-3,4-didehydrorhodopin + AH2. Its pathway is carotenoid biosynthesis; spheroidene biosynthesis. Functionally, catalyzes the introduction of C-3,4 double bonds into 1-hydroxyneurosporene (1-HO-Neu) to yield demethylspheroidene (DMS). The chain is Hydroxyneurosporene desaturase (crtD) from Rhodobacter capsulatus (strain ATCC BAA-309 / NBRC 16581 / SB1003).